The following is a 588-amino-acid chain: Pleckstrin homology domain-containing family A member 4 (588 aa).

Residues 54–153 (PVHIRGWLHK…WLRALGRASR (100 aa)) form the PH domain. Disordered stretches follow at residues 155–349 (EGED…QASM) and 495–588 (AGLG…VDHL). Serine 164 is modified (phosphoserine). A compositionally biased stretch (basic and acidic residues) spans 183-193 (VNRREEGRISE). Residues 211–222 (TPNSTVDLQTDT) are compositionally biased toward polar residues. Low complexity-rich tracts occupy residues 246–260 (PRPR…PLSA) and 321–334 (QRTQ…GSST). Serine 562 is subject to Phosphoserine.

It is found in the cytoplasm. The protein localises to the membrane. Functionally, binds specifically to phosphatidylinositol 3-phosphate (PtdIns3P), but not to other phosphoinositides. The chain is Pleckstrin homology domain-containing family A member 4 (Plekha4) from Mus musculus (Mouse).